Here is a 504-residue protein sequence, read N- to C-terminus: Taurochenodeoxycholic 6 alpha-hydroxylase (504 aa).

Helical transmembrane passes span 6-26 (LASVSGLLQVASLLGLLLLLL) and 110-130 (APVLYRLLIPWIGCGLLLLNG). A heme-binding site is contributed by Cys451.

It belongs to the cytochrome P450 family. Heme is required as a cofactor. In terms of tissue distribution, primarily expressed in liver. Low expression in kidney.

The protein resides in the endoplasmic reticulum membrane. The enzyme catalyses taurochenodeoxycholate + reduced [NADPH--hemoprotein reductase] + O2 = taurohyocholate + oxidized [NADPH--hemoprotein reductase] + H2O + H(+). It carries out the reaction lithocholate + reduced [NADPH--hemoprotein reductase] + O2 = hyodeoxycholate + oxidized [NADPH--hemoprotein reductase] + H2O + H(+). In terms of biological role, catalyzes the 6 alpha hydroxylation oxidation of taurodeoxycholate to produce the pig specific bile acid taurohyocholic acid. The chain is Taurochenodeoxycholic 6 alpha-hydroxylase (CYP4A21) from Sus scrofa (Pig).